Consider the following 211-residue polypeptide: Xanthine phosphoribosyltransferase (211 aa).

The xanthine site is built by L31 and N38. 138–142 is a binding site for 5-phospho-alpha-D-ribose 1-diphosphate; it reads ANGRT. Residue K166 coordinates xanthine.

Belongs to the purine/pyrimidine phosphoribosyltransferase family. Xpt subfamily. As to quaternary structure, homodimer.

The protein resides in the cytoplasm. The enzyme catalyses XMP + diphosphate = xanthine + 5-phospho-alpha-D-ribose 1-diphosphate. The protein operates within purine metabolism; XMP biosynthesis via salvage pathway; XMP from xanthine: step 1/1. Converts the preformed base xanthine, a product of nucleic acid breakdown, to xanthosine 5'-monophosphate (XMP), so it can be reused for RNA or DNA synthesis. In Chloroflexus aurantiacus (strain ATCC 29364 / DSM 637 / Y-400-fl), this protein is Xanthine phosphoribosyltransferase.